The sequence spans 116 residues: Beta-2-microglobulin (116 aa).

An N-terminal signal peptide occupies residues 1-19; that stretch reads MRAIITFALFCVLYVTVQG. The region spanning 24-110 is the Ig-like C1-type domain; sequence PKVQVYSHFP…VRHMNNKNIY (87 aa). Cysteine 44 and cysteine 99 are joined by a disulfide.

This sequence belongs to the beta-2-microglobulin family. As to quaternary structure, heterodimer of an alpha chain and a beta chain. Beta-2-microglobulin is the beta-chain of major histocompatibility complex class I molecules.

It is found in the secreted. Its function is as follows. Component of the class I major histocompatibility complex (MHC). Involved in the presentation of peptide antigens to the immune system. The sequence is that of Beta-2-microglobulin (b2m) from Cyprinus carpio (Common carp).